The sequence spans 248 residues: MGRKPCCSKEGMNRGAWASMEDKILVTYIKTHGEGKWRSLPKRAGLKRCGKSCRLRWLNYLRPGIKRGNISEDEEDLIIRLHNLLGNRWSLIAGRLPGRTDNEIKNYWNTNLGRRVHDQSHQHCRPNPTITSTKPADAPPANANTVATMPVRTKAARCTRAFFSDDLSDQKEVAANNDGLDNKKEEFDAVGSIGPLLQENVGNAVGEDTNIDMAVSLDSLLLFDSFQVDDGINLQSMAALLDSEDQWF.

HTH myb-type domains follow at residues 9–61 and 62–116; these read KEGM…LNYL and RPGI…GRRV. 2 DNA-binding regions (H-T-H motif) span residues 37–61 and 89–112; these read WRSL…LNYL and WSLI…NTNL. Positions 118–144 are disordered; it reads DQSHQHCRPNPTITSTKPADAPPANAN.

The protein localises to the nucleus. Transcription activator involved in the spatiotemporal regulation of flavonoid biosynthesis specifically in the corms of Montbretia. Activates the promoters of enzymes involved in the biosynthesis of the flavonol kaempferol and the flavonol-glycoside kaempferol-rhamnoside. This is Transcription factor MYB1 from Crocosmia x crocosmiiflora (Montbretia).